The chain runs to 535 residues: NEDD8-activating enzyme E1 regulatory subunit (535 aa).

The interval 332-345 (DMIADSSKFIKLQN) is interaction with UBA3.

The protein belongs to the ubiquitin-activating E1 family. ULA1 subfamily. Heterodimer of UBA3 and NAE1. The complex binds NEDD8 and UBE2M.

It functions in the pathway protein modification; protein neddylation. Its function is as follows. Regulatory subunit of the dimeric UBA3-NAE1 E1 enzyme. E1 activates NEDD8 by first adenylating its C-terminal glycine residue with ATP, thereafter linking this residue to the side chain of the catalytic cysteine, yielding a NEDD8-UBA3 thioester and free AMP. E1 finally transfers NEDD8 to the catalytic cysteine of UBE2M. The covalent attachment of NEDD8 to target proteins is known as 'neddylation' and the process is involved in the regulation of cell growth, viability and development. The protein is NEDD8-activating enzyme E1 regulatory subunit (NAE1) of Gallus gallus (Chicken).